Reading from the N-terminus, the 466-residue chain is Ribulose bisphosphate carboxylase large chain (466 aa).

Position 5 is an N6,N6,N6-trimethyllysine (Lys5). The substrate site is built by Asn114 and Thr164. Catalysis depends on Lys166, which acts as the Proton acceptor. Lys168 provides a ligand contact to substrate. Mg(2+) contacts are provided by Lys192, Asp194, and Glu195. Lys192 carries the N6-carboxylysine modification. The active-site Proton acceptor is the His285. Substrate is bound by residues Arg286, His318, and Ser370.

This sequence belongs to the RuBisCO large chain family. Type I subfamily. In terms of assembly, heterohexadecamer of 8 large chains and 8 small chains; disulfide-linked. The disulfide link is formed within the large subunit homodimers. Mg(2+) is required as a cofactor. The disulfide bond which can form in the large chain dimeric partners within the hexadecamer appears to be associated with oxidative stress and protein turnover.

Its subcellular location is the plastid. It is found in the chloroplast. The enzyme catalyses 2 (2R)-3-phosphoglycerate + 2 H(+) = D-ribulose 1,5-bisphosphate + CO2 + H2O. It catalyses the reaction D-ribulose 1,5-bisphosphate + O2 = 2-phosphoglycolate + (2R)-3-phosphoglycerate + 2 H(+). Functionally, ruBisCO catalyzes two reactions: the carboxylation of D-ribulose 1,5-bisphosphate, the primary event in carbon dioxide fixation, as well as the oxidative fragmentation of the pentose substrate in the photorespiration process. Both reactions occur simultaneously and in competition at the same active site. This chain is Ribulose bisphosphate carboxylase large chain, found in Saururus cernuus (Lizard's tail).